We begin with the raw amino-acid sequence, 91 residues long: Small ribosomal subunit protein bS18 (91 aa).

This sequence belongs to the bacterial ribosomal protein bS18 family. Part of the 30S ribosomal subunit. Forms a tight heterodimer with protein bS6.

In terms of biological role, binds as a heterodimer with protein bS6 to the central domain of the 16S rRNA, where it helps stabilize the platform of the 30S subunit. The polypeptide is Small ribosomal subunit protein bS18 (Wolbachia pipientis wMel).